The chain runs to 249 residues: 2,3-bisphosphoglycerate-dependent phosphoglycerate mutase (249 aa).

Residues 9–16, 22–23, arginine 61, 88–91, lysine 99, 115–116, and 184–185 contribute to the substrate site; these read RHGQSQWN, TG, ERHY, RR, and GN. The active-site Tele-phosphohistidine intermediate is histidine 10. Glutamate 88 (proton donor/acceptor) is an active-site residue.

This sequence belongs to the phosphoglycerate mutase family. BPG-dependent PGAM subfamily. Homodimer.

The catalysed reaction is (2R)-2-phosphoglycerate = (2R)-3-phosphoglycerate. Its pathway is carbohydrate degradation; glycolysis; pyruvate from D-glyceraldehyde 3-phosphate: step 3/5. Catalyzes the interconversion of 2-phosphoglycerate and 3-phosphoglycerate. This Xylella fastidiosa (strain M23) protein is 2,3-bisphosphoglycerate-dependent phosphoglycerate mutase.